A 457-amino-acid chain; its full sequence is NADP-specific glutamate dehydrogenase (457 aa).

The active site involves K113.

Belongs to the Glu/Leu/Phe/Val dehydrogenases family. In terms of assembly, homohexamer.

It catalyses the reaction L-glutamate + NADP(+) + H2O = 2-oxoglutarate + NH4(+) + NADPH + H(+). The sequence is that of NADP-specific glutamate dehydrogenase (GDH) from Tuber borchii (White truffle).